Consider the following 319-residue polypeptide: Lambda-crystallin homolog (319 aa).

Position 2 is an N-acetylalanine (alanine 2). Phosphoserine is present on serine 3. Residues 16 to 17 (LI), aspartate 36, glutamate 97, and lysine 102 contribute to the NAD(+) site.

Belongs to the 3-hydroxyacyl-CoA dehydrogenase family. As to quaternary structure, homodimer.

It is found in the cytoplasm. The enzyme catalyses L-gulonate + NAD(+) = 3-dehydro-L-gulonate + NADH + H(+). With respect to regulation, inhibited by malonate. Functionally, has high L-gulonate 3-dehydrogenase activity. It also exhibits low dehydrogenase activity toward L-3-hydroxybutyrate (HBA) and L-threonate. The protein is Lambda-crystallin homolog (Cryl1) of Rattus norvegicus (Rat).